A 688-amino-acid chain; its full sequence is Sodium channel and clathrin linker 1 (688 aa).

Ala-2 is subject to N-acetylalanine. Coiled-coil stretches lie at residues 59–108 (LIAE…AVEK) and 152–673 (QTAS…SVIT). Ser-681 bears the Phosphoserine mark.

As to quaternary structure, interacts with SCN10A and clathrin. Identified in a complex containing SCN10A, clathrin and SCLT1.

Its subcellular location is the cytoplasm. The protein localises to the cytoskeleton. The protein resides in the microtubule organizing center. It localises to the centrosome. It is found in the centriole. In terms of biological role, adapter protein that links SCN10A to clathrin. Regulates SCN10A channel activity, possibly by promoting channel internalization. The polypeptide is Sodium channel and clathrin linker 1 (Sclt1) (Mus musculus (Mouse)).